The chain runs to 157 residues: Transcription elongation factor GreA (157 aa).

Residues 12–74 are a coiled coil; the sequence is LKKLEEELEY…TLEAMLKNAK (63 aa).

This sequence belongs to the GreA/GreB family.

Its function is as follows. Necessary for efficient RNA polymerase transcription elongation past template-encoded arresting sites. The arresting sites in DNA have the property of trapping a certain fraction of elongating RNA polymerases that pass through, resulting in locked ternary complexes. Cleavage of the nascent transcript by cleavage factors such as GreA or GreB allows the resumption of elongation from the new 3'terminus. GreA releases sequences of 2 to 3 nucleotides. The chain is Transcription elongation factor GreA from Thermoanaerobacter pseudethanolicus (strain ATCC 33223 / 39E) (Clostridium thermohydrosulfuricum).